Here is a 100-residue protein sequence, read N- to C-terminus: Large ribosomal subunit protein bL21 (100 aa).

Belongs to the bacterial ribosomal protein bL21 family. In terms of assembly, part of the 50S ribosomal subunit. Contacts protein L20.

Its function is as follows. This protein binds to 23S rRNA in the presence of protein L20. The protein is Large ribosomal subunit protein bL21 of Wolbachia pipientis wMel.